Here is a 447-residue protein sequence, read N- to C-terminus: Methylenetetrahydrofolate--tRNA-(uracil-5-)-methyltransferase TrmFO (447 aa).

Position 10 to 15 (10 to 15 (GAGLAG)) interacts with FAD.

This sequence belongs to the MnmG family. TrmFO subfamily. FAD serves as cofactor.

It is found in the cytoplasm. It catalyses the reaction uridine(54) in tRNA + (6R)-5,10-methylene-5,6,7,8-tetrahydrofolate + NADH + H(+) = 5-methyluridine(54) in tRNA + (6S)-5,6,7,8-tetrahydrofolate + NAD(+). The enzyme catalyses uridine(54) in tRNA + (6R)-5,10-methylene-5,6,7,8-tetrahydrofolate + NADPH + H(+) = 5-methyluridine(54) in tRNA + (6S)-5,6,7,8-tetrahydrofolate + NADP(+). Functionally, catalyzes the folate-dependent formation of 5-methyl-uridine at position 54 (M-5-U54) in all tRNAs. In Lactococcus lactis subsp. lactis (strain IL1403) (Streptococcus lactis), this protein is Methylenetetrahydrofolate--tRNA-(uracil-5-)-methyltransferase TrmFO.